A 579-amino-acid polypeptide reads, in one-letter code: Suppressor of cytokine signaling 7 (579 aa).

3 disordered regions span residues Met-1–Glu-25, Pro-89–Ser-270, and Gln-295–Ser-315. 3 stretches are compositionally biased toward pro residues: residues Pro-89–Ala-99, Pro-155–Phe-165, and Gln-185–Leu-196. Positions Ala-124–Arg-492 are mediates interaction with SORBS3. Over residues Gly-206–Arg-217 the composition is skewed to basic residues. Residues Pro-301–Arg-311 are compositionally biased toward pro residues. Positions Trp-398 to Val-507 constitute an SH2 domain. In terms of domain architecture, SOCS box spans Gln-502–Tyr-552.

In terms of assembly, substrate-recognition component of the ECS(SOCS7) complex, composed of SOCS7, CUL5, ELOB, ELOC and RNF7/RBX2. Interacts, via the third proline-rich region, with the second SH3 domain of the adapter protein NCK1. Also interacts with GRB2, INSR, PLCG1, SORBS3/vinexin, and phosphorylated STAT3 and STAT5. Interacts with SEPT6. Interacts with phosphorylated IRS4 and PIK3R1. In terms of tissue distribution, widely expressed with higher expression in brain and testis where it is expressed by spermatocytes and early spermatids. Also significantly expressed in spleen, skeletal muscle and kidney.

Its subcellular location is the cytoplasm. It localises to the nucleus. It is found in the cell membrane. It functions in the pathway protein modification; protein ubiquitination. Substrate-recognition component of a cullin-5-RING E3 ubiquitin-protein ligase complex (ECS complex, also named CRL5 complex), which mediates the ubiquitination and subsequent proteasomal degradation of target proteins, such as DAB1 and IRS1. Specifically recognizes and binds phosphorylated proteins via its SH2 domain, promoting their ubiquitination. The ECS(SOCS7) complex acts as a key regulator of reelin signaling by mediating ubiquitination and degradation of phosphorylated DAB1 in the cortical plate of the developing cerebral cortex, thereby regulating neuron positioning during cortex development. Functions in insulin signaling and glucose homeostasis through IRS1 ubiquitination and subsequent proteasomal degradation. Also inhibits prolactin, growth hormone and leptin signaling by preventing STAT3 and STAT5 activation, sequestering them in the cytoplasm and reducing their binding to DNA. The polypeptide is Suppressor of cytokine signaling 7 (Mus musculus (Mouse)).